Here is a 181-residue protein sequence, read N- to C-terminus: MVTPRRDSGKDRPSLKDARILVVEARYYEDIADELLRGATAAIAAAQAEAEVVTVPGALEIPQAVAILVEAAAREARPYDAVVALGCVIRGETGHYDIVAGESARALMDLSVLLRLPLGNGILTVETEAQAQARARVSEMNKGGGAAEAALAVLALKRAKAAERPDRTIGFTPRRTAETQE.

5-amino-6-(D-ribitylamino)uracil contacts are provided by residues Y27, 58–60 (ALE), and 87–89 (CVI). 92-93 (ET) provides a ligand contact to (2S)-2-hydroxy-3-oxobutyl phosphate. Residue H95 is the Proton donor of the active site. N120 lines the 5-amino-6-(D-ribitylamino)uracil pocket. Residue R134 participates in (2S)-2-hydroxy-3-oxobutyl phosphate binding.

The protein belongs to the DMRL synthase family.

It carries out the reaction (2S)-2-hydroxy-3-oxobutyl phosphate + 5-amino-6-(D-ribitylamino)uracil = 6,7-dimethyl-8-(1-D-ribityl)lumazine + phosphate + 2 H2O + H(+). It functions in the pathway cofactor biosynthesis; riboflavin biosynthesis; riboflavin from 2-hydroxy-3-oxobutyl phosphate and 5-amino-6-(D-ribitylamino)uracil: step 1/2. Catalyzes the formation of 6,7-dimethyl-8-ribityllumazine by condensation of 5-amino-6-(D-ribitylamino)uracil with 3,4-dihydroxy-2-butanone 4-phosphate. This is the penultimate step in the biosynthesis of riboflavin. The protein is 6,7-dimethyl-8-ribityllumazine synthase of Methylobacterium sp. (strain 4-46).